The sequence spans 187 residues: Elongation factor P (187 aa).

The protein belongs to the elongation factor P family.

The protein localises to the cytoplasm. The protein operates within protein biosynthesis; polypeptide chain elongation. Functionally, involved in peptide bond synthesis. Stimulates efficient translation and peptide-bond synthesis on native or reconstituted 70S ribosomes in vitro. Probably functions indirectly by altering the affinity of the ribosome for aminoacyl-tRNA, thus increasing their reactivity as acceptors for peptidyl transferase. This Roseiflexus sp. (strain RS-1) protein is Elongation factor P.